The following is an 81-amino-acid chain: Photosystem I iron-sulfur center (81 aa).

4Fe-4S ferredoxin-type domains lie at 2–31 (SHSVKIYDTCIGCTHCVRACPTDVLEMIPW) and 39–68 (IASAPRTEDCVGCKRCESACPTDFLSVRVY). Positions 11, 14, 17, 21, 48, 51, 54, and 58 each coordinate [4Fe-4S] cluster.

The eukaryotic PSI reaction center is composed of at least 11 subunits. [4Fe-4S] cluster serves as cofactor.

Its subcellular location is the plastid. It localises to the chloroplast thylakoid membrane. The enzyme catalyses reduced [plastocyanin] + hnu + oxidized [2Fe-2S]-[ferredoxin] = oxidized [plastocyanin] + reduced [2Fe-2S]-[ferredoxin]. In terms of biological role, apoprotein for the two 4Fe-4S centers FA and FB of photosystem I (PSI); essential for photochemical activity. FB is the terminal electron acceptor of PSI, donating electrons to ferredoxin. The C-terminus interacts with PsaA/B/D and helps assemble the protein into the PSI complex. Required for binding of PsaD and PsaE to PSI. PSI is a plastocyanin-ferredoxin oxidoreductase, converting photonic excitation into a charge separation, which transfers an electron from the donor P700 chlorophyll pair to the spectroscopically characterized acceptors A0, A1, FX, FA and FB in turn. The protein is Photosystem I iron-sulfur center of Zea mays (Maize).